The following is a 260-amino-acid chain: Indole-3-glycerol phosphate synthase (260 aa).

This sequence belongs to the TrpC family.

It carries out the reaction 1-(2-carboxyphenylamino)-1-deoxy-D-ribulose 5-phosphate + H(+) = (1S,2R)-1-C-(indol-3-yl)glycerol 3-phosphate + CO2 + H2O. It functions in the pathway amino-acid biosynthesis; L-tryptophan biosynthesis; L-tryptophan from chorismate: step 4/5. This chain is Indole-3-glycerol phosphate synthase, found in Staphylococcus saprophyticus subsp. saprophyticus (strain ATCC 15305 / DSM 20229 / NCIMB 8711 / NCTC 7292 / S-41).